The sequence spans 386 residues: Transcription factor GTE1 (386 aa).

2 disordered regions span residues 66–106 (GAAQ…KHVS) and 340–386 (ANKS…AKKA). Residues 68–78 (AQTNTSKSNSG) show a composition bias toward polar residues. Positions 105–211 (VSSPDLMRQF…EKFEEKWLLI (107 aa)) constitute a Bromo domain. The NET domain maps to 263-344 (RESVVQRCRK…EALKAANKSS (82 aa)). Low complexity predominate over residues 345 to 358 (GGTNAQNNNNTGTG).

As to expression, barely detectable in stems, leaves, siliques, and dry seeds, but was present at considerable levels in roots, flowers and imbibited seeds.

It is found in the nucleus. Its function is as follows. Transcription activator that plays a role in the promotion of seed germination by both negatively and positively regulating the abscisic acid (ABA) and phytochrome A (phyA) transduction pathways, respectively. The sequence is that of Transcription factor GTE1 (GTE1) from Arabidopsis thaliana (Mouse-ear cress).